We begin with the raw amino-acid sequence, 193 residues long: NADH-quinone oxidoreductase subunit B (193 aa).

Positions 1-25 (MGLNDSSGTLVAPKPKGIIDPNTGR) are disordered. Positions 72, 73, 137, and 167 each coordinate [4Fe-4S] cluster.

Belongs to the complex I 20 kDa subunit family. As to quaternary structure, NDH-1 is composed of 14 different subunits. Subunits NuoB, C, D, E, F, and G constitute the peripheral sector of the complex. [4Fe-4S] cluster is required as a cofactor.

The protein resides in the cell inner membrane. It carries out the reaction a quinone + NADH + 5 H(+)(in) = a quinol + NAD(+) + 4 H(+)(out). Functionally, NDH-1 shuttles electrons from NADH, via FMN and iron-sulfur (Fe-S) centers, to quinones in the respiratory chain. Couples the redox reaction to proton translocation (for every two electrons transferred, four hydrogen ions are translocated across the cytoplasmic membrane), and thus conserves the redox energy in a proton gradient. The chain is NADH-quinone oxidoreductase subunit B from Mesorhizobium japonicum (strain LMG 29417 / CECT 9101 / MAFF 303099) (Mesorhizobium loti (strain MAFF 303099)).